Here is a 354-residue protein sequence, read N- to C-terminus: Peptide-N(4)-(N-acetyl-beta-D-glucosaminyl)asparagine amidase F (354 aa).

The N-terminal stretch at 1-40 (MRKLLIFSISAYLMAGIVSCKGVDSATPVTEDRLALNAVN) is a signal peptide. Cysteine 91 and cysteine 96 are joined by a disulfide. Active-site residues include aspartate 100, glutamate 158, and glutamate 246. Disulfide bonds link cysteine 244–cysteine 248 and cysteine 271–cysteine 292.

In terms of assembly, monomer.

The enzyme catalyses Hydrolysis of an N(4)-(acetyl-beta-D-glucosaminyl)asparagine residue in which the glucosamine residue may be further glycosylated, to yield a (substituted) N-acetyl-beta-D-glucosaminylamine and a peptide containing an aspartate residue.. Functionally, cleaves an entire glycan from a glycoprotein. Requires that the glycosylated asparagine moiety (reaction 1) be substituted on its amino (R1) and carboxyl (R2) terminus with a polypeptide chain. The chain is Peptide-N(4)-(N-acetyl-beta-D-glucosaminyl)asparagine amidase F (ngl) from Elizabethkingia miricola (Chryseobacterium miricola).